We begin with the raw amino-acid sequence, 519 residues long: DNA-directed RNA polymerase subunit Rpo2N (519 aa).

Belongs to the RNA polymerase beta chain family. Part of the RNA polymerase complex.

The protein resides in the cytoplasm. The catalysed reaction is RNA(n) + a ribonucleoside 5'-triphosphate = RNA(n+1) + diphosphate. Its function is as follows. DNA-dependent RNA polymerase (RNAP) catalyzes the transcription of DNA into RNA using the four ribonucleoside triphosphates as substrates. The Rpo2 subunit (Rpo2N and Rpo2C in this organism) is implicated in DNA promoter recognition and in nucleotide binding. The sequence is that of DNA-directed RNA polymerase subunit Rpo2N from Methanothermobacter thermautotrophicus (strain ATCC 29096 / DSM 1053 / JCM 10044 / NBRC 100330 / Delta H) (Methanobacterium thermoautotrophicum).